We begin with the raw amino-acid sequence, 185 residues long: Elongation factor P (185 aa).

Belongs to the elongation factor P family.

Its subcellular location is the cytoplasm. Its pathway is protein biosynthesis; polypeptide chain elongation. Involved in peptide bond synthesis. Stimulates efficient translation and peptide-bond synthesis on native or reconstituted 70S ribosomes in vitro. Probably functions indirectly by altering the affinity of the ribosome for aminoacyl-tRNA, thus increasing their reactivity as acceptors for peptidyl transferase. This Alkaliphilus oremlandii (strain OhILAs) (Clostridium oremlandii (strain OhILAs)) protein is Elongation factor P.